A 115-amino-acid polypeptide reads, in one-letter code: Large ribosomal subunit protein bL35m (115 aa).

The protein belongs to the bacterial ribosomal protein bL35 family.

Its subcellular location is the mitochondrion. The protein is Large ribosomal subunit protein bL35m of Saccharomyces cerevisiae (strain YJM789) (Baker's yeast).